The sequence spans 110 residues: MARVTVEDCLDHVENRFELVLIAAKRAHQLSSGGYKPLLNAGKDKPTVVALREIEAGLIDSSILSEIYVIDEQLSAQQKVLDSVKMSEIKDELSVTAVDKVIDEITEIEE.

It belongs to the RNA polymerase subunit omega family. In terms of assembly, the RNAP catalytic core consists of 2 alpha, 1 beta, 1 beta' and 1 omega subunit. When a sigma factor is associated with the core the holoenzyme is formed, which can initiate transcription.

It catalyses the reaction RNA(n) + a ribonucleoside 5'-triphosphate = RNA(n+1) + diphosphate. Functionally, promotes RNA polymerase assembly. Latches the N- and C-terminal regions of the beta' subunit thereby facilitating its interaction with the beta and alpha subunits. In Vesicomyosocius okutanii subsp. Calyptogena okutanii (strain HA), this protein is DNA-directed RNA polymerase subunit omega.